The sequence spans 429 residues: Enolase (429 aa).

Gln-167 contributes to the (2R)-2-phosphoglycerate binding site. Glu-209 functions as the Proton donor in the catalytic mechanism. Residues Asp-246, Glu-289, and Asp-316 each contribute to the Mg(2+) site. (2R)-2-phosphoglycerate-binding residues include Lys-341, Arg-370, Ser-371, and Lys-392. The active-site Proton acceptor is the Lys-341.

This sequence belongs to the enolase family. As to quaternary structure, component of the RNA degradosome, a multiprotein complex involved in RNA processing and mRNA degradation. Mg(2+) is required as a cofactor.

The protein localises to the cytoplasm. Its subcellular location is the secreted. The protein resides in the cell surface. The catalysed reaction is (2R)-2-phosphoglycerate = phosphoenolpyruvate + H2O. The protein operates within carbohydrate degradation; glycolysis; pyruvate from D-glyceraldehyde 3-phosphate: step 4/5. Catalyzes the reversible conversion of 2-phosphoglycerate (2-PG) into phosphoenolpyruvate (PEP). It is essential for the degradation of carbohydrates via glycolysis. In Pseudomonas putida (strain ATCC 47054 / DSM 6125 / CFBP 8728 / NCIMB 11950 / KT2440), this protein is Enolase.